The sequence spans 325 residues: NADH-quinone oxidoreductase subunit H (325 aa).

Helical transmembrane passes span 11–31 (ILLSILKAVVILLVVVTCGAF), 50–69 (NRVGWGGSLQLVADMIKMFF), 81–101 (VIFTLAPMIAFTSLLLSFAIV), 114–134 (IGILFFLMMAGLAVYAVLFAG), 154–174 (VSYEVFLGLSLMGVVAQAGSF), 186–206 (LWNVIPQFFGFVTFAIAGVAV), 237–257 (FFVGEYIGIVTVSALMVTLFF), 265–285 (LPPFVWFALKTAFFMMMFILI), and 304–324 (VCLPLTLINLLVTAAVILWQA).

The protein belongs to the complex I subunit 1 family. In terms of assembly, NDH-1 is composed of 13 different subunits. Subunits NuoA, H, J, K, L, M, N constitute the membrane sector of the complex.

Its subcellular location is the cell inner membrane. It carries out the reaction a quinone + NADH + 5 H(+)(in) = a quinol + NAD(+) + 4 H(+)(out). Functionally, NDH-1 shuttles electrons from NADH, via FMN and iron-sulfur (Fe-S) centers, to quinones in the respiratory chain. The immediate electron acceptor for the enzyme in this species is believed to be ubiquinone. Couples the redox reaction to proton translocation (for every two electrons transferred, four hydrogen ions are translocated across the cytoplasmic membrane), and thus conserves the redox energy in a proton gradient. This subunit may bind ubiquinone. The sequence is that of NADH-quinone oxidoreductase subunit H from Salmonella agona (strain SL483).